A 292-amino-acid polypeptide reads, in one-letter code: Cyclin-dependent kinase 5 homolog (292 aa).

One can recognise a Protein kinase domain in the interval 4–285; the sequence is YSKIEKLGEG…AAAALKHPYF (282 aa). Residues 10-18 and Lys33 contribute to the ATP site; that span reads LGEGTYGIV. The residue at position 14 (Thr14) is a Phosphothreonine. Tyr15 is subject to Phosphotyrosine. The Proton acceptor role is filled by Asp126.

The protein belongs to the protein kinase superfamily. CMGC Ser/Thr protein kinase family. CDC2/CDKX subfamily.

It carries out the reaction L-seryl-[protein] + ATP = O-phospho-L-seryl-[protein] + ADP + H(+). It catalyses the reaction L-threonyl-[protein] + ATP = O-phospho-L-threonyl-[protein] + ADP + H(+). Phosphorylation at Thr-14 or Tyr-15 inactivates the enzyme. The chain is Cyclin-dependent kinase 5 homolog (cdk5) from Dictyostelium discoideum (Social amoeba).